We begin with the raw amino-acid sequence, 465 residues long: Cysteine--tRNA ligase (465 aa).

Cys-27 contributes to the Zn(2+) binding site. The short motif at 29–39 is the 'HIGH' region element; it reads PTVYDDAHLGH. Zn(2+)-binding residues include Cys-207, His-237, and Glu-241. A 'KMSKS' region motif is present at residues 269 to 273; sequence KMSKS. Lys-272 lines the ATP pocket.

Belongs to the class-I aminoacyl-tRNA synthetase family. Monomer. Requires Zn(2+) as cofactor.

It localises to the cytoplasm. The catalysed reaction is tRNA(Cys) + L-cysteine + ATP = L-cysteinyl-tRNA(Cys) + AMP + diphosphate. The protein is Cysteine--tRNA ligase of Helicobacter pylori (strain HPAG1).